The sequence spans 351 residues: UDP-N-acetylglucosamine--N-acetylmuramyl-(pentapeptide) pyrophosphoryl-undecaprenol N-acetylglucosamine transferase (351 aa).

Residues 13–15 (TGG), N125, R161, S189, I241, 260–265 (ALTVCE), and Q285 contribute to the UDP-N-acetyl-alpha-D-glucosamine site.

This sequence belongs to the glycosyltransferase 28 family. MurG subfamily.

It is found in the cell inner membrane. The catalysed reaction is di-trans,octa-cis-undecaprenyl diphospho-N-acetyl-alpha-D-muramoyl-L-alanyl-D-glutamyl-meso-2,6-diaminopimeloyl-D-alanyl-D-alanine + UDP-N-acetyl-alpha-D-glucosamine = di-trans,octa-cis-undecaprenyl diphospho-[N-acetyl-alpha-D-glucosaminyl-(1-&gt;4)]-N-acetyl-alpha-D-muramoyl-L-alanyl-D-glutamyl-meso-2,6-diaminopimeloyl-D-alanyl-D-alanine + UDP + H(+). It functions in the pathway cell wall biogenesis; peptidoglycan biosynthesis. Cell wall formation. Catalyzes the transfer of a GlcNAc subunit on undecaprenyl-pyrophosphoryl-MurNAc-pentapeptide (lipid intermediate I) to form undecaprenyl-pyrophosphoryl-MurNAc-(pentapeptide)GlcNAc (lipid intermediate II). This Haemophilus influenzae (strain ATCC 51907 / DSM 11121 / KW20 / Rd) protein is UDP-N-acetylglucosamine--N-acetylmuramyl-(pentapeptide) pyrophosphoryl-undecaprenol N-acetylglucosamine transferase.